Consider the following 442-residue polypeptide: Tubulin beta chain (442 aa).

GTP is bound by residues glutamine 11, glutamate 69, serine 138, glycine 142, threonine 143, glycine 144, asparagine 204, and asparagine 226. Residue glutamate 69 participates in Mg(2+) binding. The segment at 421-442 (EYQQYQDATAEDEEEMDEEQME) is disordered. Residues 429–442 (TAEDEEEMDEEQME) show a composition bias toward acidic residues.

It belongs to the tubulin family. Dimer of alpha and beta chains. A typical microtubule is a hollow water-filled tube with an outer diameter of 25 nm and an inner diameter of 15 nM. Alpha-beta heterodimers associate head-to-tail to form protofilaments running lengthwise along the microtubule wall with the beta-tubulin subunit facing the microtubule plus end conferring a structural polarity. Microtubules usually have 13 protofilaments but different protofilament numbers can be found in some organisms and specialized cells. Mg(2+) is required as a cofactor.

Its subcellular location is the cytoplasm. The protein resides in the cytoskeleton. Its function is as follows. Tubulin is the major constituent of microtubules, a cylinder consisting of laterally associated linear protofilaments composed of alpha- and beta-tubulin heterodimers. Microtubules grow by the addition of GTP-tubulin dimers to the microtubule end, where a stabilizing cap forms. Below the cap, tubulin dimers are in GDP-bound state, owing to GTPase activity of alpha-tubulin. The polypeptide is Tubulin beta chain (TUBB1) (Stylonychia lemnae (Ciliate)).